The following is a 463-amino-acid chain: Mitochondrial dynamics protein MID51 (463 aa).

Over 1–23 (MAGAGERKGKKDDNGIGTAIDFV) the chain is Mitochondrial intermembrane. A helical membrane pass occupies residues 24–46 (LSNARLVLGVGGAAMLGIATLAV). At 47-463 (KRMYDRAISA…LSEPEVLLQT (417 aa)) the chain is on the cytoplasmic side. The tract at residues 49-195 (MYDRAISAPT…LSGSLYDDLQ (147 aa)) is dimerization. Residues Ser-55, Ser-59, Ser-79, and Ser-94 each carry the phosphoserine modification. The interval 57–77 (PTSPTRLSHSGKRSWEEPNWM) is disordered. The tract at residues 160–169 (AAVDICAELR) is important for interaction with DNM1L. Ser-187, Ser-189, and His-201 together coordinate ADP. Positions 234–243 (RRENPEYFPR) are important for interaction with DNM1L. ADP-binding residues include Ser-340, Arg-342, and Lys-368.

This sequence belongs to the MID49/MID51 family. Homodimer. Interacts with DNM1L.

It localises to the mitochondrion outer membrane. Functionally, mitochondrial outer membrane protein which regulates mitochondrial fission/fusion dynamics. Promotes the recruitment and association of the fission mediator dynamin-related protein 1 (DNM1L) to the mitochondrial surface independently of the mitochondrial fission FIS1 and MFF proteins. Regulates DNM1L GTPase activity and DNM1L oligomerization. Binds ADP and can also bind GDP, although with lower affinity. Does not bind CDP, UDP, ATP, AMP or GTP. Inhibits DNM1L GTPase activity in the absence of bound ADP. Requires ADP to stimulate DNM1L GTPase activity and the assembly of DNM1L into long, oligomeric tubules with a spiral pattern, as opposed to the ring-like DNM1L oligomers observed in the absence of bound ADP. Does not require ADP for its function in recruiting DNM1L. The protein is Mitochondrial dynamics protein MID51 (Mief1) of Mus musculus (Mouse).